Consider the following 207-residue polypeptide: Peptidyl-tRNA hydrolase (207 aa).

Tyr14 serves as a coordination point for tRNA. His19 serves as the catalytic Proton acceptor. TRNA contacts are provided by Tyr64, Asn66, and Asn112.

It belongs to the PTH family. In terms of assembly, monomer.

It is found in the cytoplasm. It catalyses the reaction an N-acyl-L-alpha-aminoacyl-tRNA + H2O = an N-acyl-L-amino acid + a tRNA + H(+). In terms of biological role, hydrolyzes ribosome-free peptidyl-tRNAs (with 1 or more amino acids incorporated), which drop off the ribosome during protein synthesis, or as a result of ribosome stalling. Its function is as follows. Catalyzes the release of premature peptidyl moieties from peptidyl-tRNA molecules trapped in stalled 50S ribosomal subunits, and thus maintains levels of free tRNAs and 50S ribosomes. The sequence is that of Peptidyl-tRNA hydrolase from Rhodopseudomonas palustris (strain HaA2).